A 335-amino-acid polypeptide reads, in one-letter code: Syntaxin-18 (335 aa).

The Cytoplasmic segment spans residues 1–309 (MAVDITLLFR…EDIREAIKNN (309 aa)). Over residues 168 to 208 (KLEPEPNTKTRESTSSEKVSRSPSKDSEENPATEERPEKIL) the composition is skewed to basic and acidic residues. The disordered stretch occupies residues 168-226 (KLEPEPNTKTRESTSSEKVSRSPSKDSEENPATEERPEKILAETQPELGTWGDGKGEDE). Residues 243 to 305 (IGEMNSLFDE…KEGNEDIREA (63 aa)) form the t-SNARE coiled-coil homology domain. Residues 310–330 (AGFRVWILFFLVMCSFSLLFL) traverse the membrane as a helical; Anchor for type IV membrane protein segment. Topologically, residues 331–335 (DWYDS) are vesicular.

It belongs to the syntaxin family. Component of a SNARE complex consisting of STX18, USE1L, BNIP1/SEC20L, and SEC22B. RINT1/TIP20L and ZW10 are associated with the complex through interaction with BNIP1/SEC20L. Interacts directly with USE1L and BNIP1/SEC20L.

It localises to the endoplasmic reticulum membrane. The protein localises to the golgi apparatus membrane. In terms of biological role, syntaxin that may be involved in targeting and fusion of Golgi-derived retrograde transport vesicles with the ER. The polypeptide is Syntaxin-18 (STX18) (Pongo abelii (Sumatran orangutan)).